The following is a 566-amino-acid chain: Liver carboxylesterase 1 (566 aa).

The N-terminal stretch at 1–18 (MWLRALVLATLAAFTAWG) is a signal peptide. Asn-79 is a glycosylation site (N-linked (GlcNAc...) asparagine). Residues Cys-87 and Cys-116 are joined by a disulfide bond. Ser-221 acts as the Acyl-ester intermediate in catalysis. Residues Cys-274 and Cys-285 are joined by a disulfide bond. The Charge relay system role is filled by Glu-354. Phosphoserine is present on Ser-379. Residue His-467 is the Charge relay system of the active site.

Belongs to the type-B carboxylesterase/lipase family. In terms of assembly, homotrimer and homohexamer. Binds to beta-glucuronidase.

Its subcellular location is the endoplasmic reticulum lumen. The protein resides in the cytoplasm. The protein localises to the lipid droplet. The enzyme catalyses a carboxylic ester + H2O = an alcohol + a carboxylate + H(+). It carries out the reaction cholesteryl (9Z-octadecenoate) + H2O = cholesterol + (9Z)-octadecenoate + H(+). The catalysed reaction is 2-(5Z,8Z,11Z,14Z-eicosatetraenoyl)-glycerol + H2O = glycerol + (5Z,8Z,11Z,14Z)-eicosatetraenoate + H(+). It catalyses the reaction prostaglandin E2 1-glyceryl ester + H2O = prostaglandin E2 + glycerol + H(+). The enzyme catalyses a cholesterol ester + H2O = cholesterol + a fatty acid + H(+). It carries out the reaction prostaglandin F2alpha 1-glyceryl ester + H2O = prostaglandin F2alpha + glycerol + H(+). Its function is as follows. Involved in the detoxification of xenobiotics and in the activation of ester and amide prodrugs. Hydrolyzes aromatic and aliphatic esters, but has no catalytic activity toward amides or a fatty acyl-CoA ester. Displays fatty acid ethyl ester synthase activity, catalyzing the ethyl esterification of oleic acid to ethyloleate. Converts monoacylglycerides to free fatty acids and glycerol. Hydrolyzes of 2-arachidonoylglycerol and prostaglandins. Hydrolyzes cellular cholesteryl esters to free cholesterols and promotes reverse cholesterol transport (RCT) by facilitating both the initial and final steps in the process. First of all, allows free cholesterol efflux from macrophages to extracellular cholesterol acceptors and secondly, releases free cholesterol from lipoprotein-delivered cholesteryl esters in the liver for bile acid synthesis or direct secretion into the bile. The sequence is that of Liver carboxylesterase 1 from Macaca fascicularis (Crab-eating macaque).